The chain runs to 352 residues: Molybdenum import ATP-binding protein ModC (352 aa).

Residues 1 to 229 (MLELNFSQTL…SVMNPWLPKE (229 aa)) form the ABC transporter domain. ATP is bound at residue 31-38 (GVSGAGKT). Positions 289–352 (QTSIRNVLRA…AQIKSVSITA (64 aa)) constitute a Mop domain.

The protein belongs to the ABC transporter superfamily. Molybdate importer (TC 3.A.1.8) family. The complex is composed of two ATP-binding proteins (ModC), two transmembrane proteins (ModB) and a solute-binding protein (ModA).

Its subcellular location is the cell inner membrane. The catalysed reaction is molybdate(out) + ATP + H2O = molybdate(in) + ADP + phosphate + H(+). Its function is as follows. Part of the ABC transporter complex ModABC involved in molybdenum import. Responsible for energy coupling to the transport system. The chain is Molybdenum import ATP-binding protein ModC from Shigella boydii serotype 4 (strain Sb227).